The chain runs to 87 residues: Beta-toxin Cn5 (87 aa).

Positions 1–19 are cleaved as a signal peptide; the sequence is MNSLLMITACLFLIGTVWA. One can recognise an LCN-type CS-alpha/beta domain in the interval 20 to 85; that stretch reads KEGYLVNKST…TYPLPNKSCS (66 aa). 4 disulfide bridges follow: Cys-31–Cys-84, Cys-35–Cys-60, Cys-44–Cys-65, and Cys-48–Cys-67.

The protein belongs to the long (4 C-C) scorpion toxin superfamily. Sodium channel inhibitor family. Beta subfamily. As to expression, expressed by the venom gland.

It localises to the secreted. Its function is as follows. Beta toxins bind voltage-independently at site-4 of sodium channels (Nav) and shift the voltage of activation toward more negative potentials thereby affecting sodium channel activation and promoting spontaneous and repetitive firing. This toxin is lethal to crustaceans (freshwater crayfish (Cambarellus montezumae spp.)), it provokes a reversible paralysis to insects (crickets (Achaeta spp.)), but is not toxic to mice. At high concentrations, it does displace the (beta) mammal-specific toxin Cn2 from rat brain synaptosomes. The polypeptide is Beta-toxin Cn5 (Centruroides noxius (Mexican scorpion)).